The sequence spans 574 residues: Septation ring formation regulator EzrA (574 aa).

Residues 1–7 are Extracellular-facing; it reads MSSGIIL. The chain crosses the membrane as a helical span at residues 8–26; that stretch reads LIVAIVLLVIIAYLVGVII. Topologically, residues 27–574 are cytoplasmic; that stretch reads RKRNDSLITS…YEKTREHIRF (548 aa). 3 coiled-coil regions span residues 102-141, 274-350, and 459-520; these read NFIRAKHEINSVESQLNLVEEDIASIREALNILKEQEEKN, ELVT…ETES, and QLEA…SFEA.

Belongs to the EzrA family.

Its subcellular location is the cell membrane. Functionally, negative regulator of FtsZ ring formation; modulates the frequency and position of FtsZ ring formation. Inhibits FtsZ ring formation at polar sites. Interacts either with FtsZ or with one of its binding partners to promote depolymerization. This is Septation ring formation regulator EzrA from Streptococcus pyogenes serotype M1.